The following is a 188-amino-acid chain: Adenine phosphoribosyltransferase (188 aa).

The protein belongs to the purine/pyrimidine phosphoribosyltransferase family. Homodimer.

Its subcellular location is the cytoplasm. It carries out the reaction AMP + diphosphate = 5-phospho-alpha-D-ribose 1-diphosphate + adenine. Its pathway is purine metabolism; AMP biosynthesis via salvage pathway; AMP from adenine: step 1/1. Its function is as follows. Catalyzes a salvage reaction resulting in the formation of AMP, that is energically less costly than de novo synthesis. The polypeptide is Adenine phosphoribosyltransferase (Neisseria meningitidis serogroup B (strain ATCC BAA-335 / MC58)).